Here is a 144-residue protein sequence, read N- to C-terminus: Large ribosomal subunit protein uL11m (144 aa).

The transit peptide at 1–32 (MASTRTTIIKLIVPAGKATPTPPIGPALGARG) directs the protein to the mitochondrion.

This sequence belongs to the universal ribosomal protein uL11 family. As to quaternary structure, component of the mitochondrial large ribosomal subunit (mt-LSU). Mature yeast 74S mitochondrial ribosomes consist of a small (37S) and a large (54S) subunit. The 37S small subunit contains a 15S ribosomal RNA (15S mt-rRNA) and at least 32 different proteins. The 54S large subunit contains a 21S rRNA (21S mt-rRNA) and at least 45 different proteins.

The protein localises to the mitochondrion. It is found in the cytoplasm. Its function is as follows. Component of the mitochondrial ribosome (mitoribosome), a dedicated translation machinery responsible for the synthesis of mitochondrial genome-encoded proteins, including at least some of the essential transmembrane subunits of the mitochondrial respiratory chain. The mitoribosomes are attached to the mitochondrial inner membrane and translation products are cotranslationally integrated into the membrane. This is Large ribosomal subunit protein uL11m from Schizosaccharomyces pombe (strain 972 / ATCC 24843) (Fission yeast).